The following is a 217-amino-acid chain: Spore coat protein F-like protein YhcQ (217 aa).

Over residues 1–11 the composition is skewed to low complexity; sequence MDQFNQQQQSQ. The segment at 1–28 is disordered; it reads MDQFNQQQQSQMNKGIPGKPHKNHGGHE.

This sequence belongs to the CotF family.

It localises to the spore coat. This Bacillus subtilis (strain 168) protein is Spore coat protein F-like protein YhcQ (yhcQ).